Here is a 103-residue protein sequence, read N- to C-terminus: Somatoliberin (103 aa).

Positions 1–19 are cleaved as a signal peptide; it reads MLLWVLFVILILTSGSHCS. 2 consecutive propeptides follow at residues 20 to 30 and 74 to 103; these read LPPSPPFRMQR and QEDS…SADA.

It belongs to the glucagon family.

It localises to the secreted. GRF is released by the hypothalamus and acts on the adenohypophyse to stimulate the secretion of growth hormone. This Mus musculus (Mouse) protein is Somatoliberin (Ghrh).